The primary structure comprises 263 residues: 5'-nucleotidase SurE (263 aa).

The a divalent metal cation site is built by Asp-15, Asp-16, Ser-46, and Asn-102.

The protein belongs to the SurE nucleotidase family. A divalent metal cation serves as cofactor.

The protein resides in the cytoplasm. The enzyme catalyses a ribonucleoside 5'-phosphate + H2O = a ribonucleoside + phosphate. Its function is as follows. Nucleotidase that shows phosphatase activity on nucleoside 5'-monophosphates. In Chlorobaculum tepidum (strain ATCC 49652 / DSM 12025 / NBRC 103806 / TLS) (Chlorobium tepidum), this protein is 5'-nucleotidase SurE.